The primary structure comprises 630 residues: DNA mismatch repair protein MutL (630 aa).

Disordered regions lie at residues 361 to 386 (VLSSDIGGGEDATAPLAPLTGDAPAE) and 407 to 431 (FERKQEEEVGEERCSPRLPTDGQAE). Residues 407-421 (FERKQEEEVGEERCS) show a composition bias toward basic and acidic residues.

Belongs to the DNA mismatch repair MutL/HexB family.

This protein is involved in the repair of mismatches in DNA. It is required for dam-dependent methyl-directed DNA mismatch repair. May act as a 'molecular matchmaker', a protein that promotes the formation of a stable complex between two or more DNA-binding proteins in an ATP-dependent manner without itself being part of a final effector complex. In Geobacillus kaustophilus (strain HTA426), this protein is DNA mismatch repair protein MutL.